Reading from the N-terminus, the 278-residue chain is Orotidine 5'-phosphate decarboxylase (278 aa).

Substrate contacts are provided by residues aspartate 40, 62-64 (KTH), 93-102 (DRKFIDIGNT), tyrosine 228, and arginine 246. Catalysis depends on lysine 95, which acts as the Proton donor.

This sequence belongs to the OMP decarboxylase family.

The catalysed reaction is orotidine 5'-phosphate + H(+) = UMP + CO2. It functions in the pathway pyrimidine metabolism; UMP biosynthesis via de novo pathway; UMP from orotate: step 2/2. This is Orotidine 5'-phosphate decarboxylase (PYR1) from Passalora fulva (Tomato leaf mold).